Reading from the N-terminus, the 250-residue chain is Diphthine synthase (250 aa).

Residues L9, D85, V88, 113–114 (SI), L165, A202, and H227 each bind S-adenosyl-L-methionine.

This sequence belongs to the diphthine synthase family. As to quaternary structure, homodimer.

It catalyses the reaction 2-[(3S)-amino-3-carboxypropyl]-L-histidyl-[translation elongation factor 2] + 3 S-adenosyl-L-methionine = diphthine-[translation elongation factor 2] + 3 S-adenosyl-L-homocysteine + 3 H(+). Its pathway is protein modification; peptidyl-diphthamide biosynthesis. Its function is as follows. S-adenosyl-L-methionine-dependent methyltransferase that catalyzes the trimethylation of the amino group of the modified target histidine residue in translation elongation factor 2 (EF-2), to form an intermediate called diphthine. The three successive methylation reactions represent the second step of diphthamide biosynthesis. This Methanoregula boonei (strain DSM 21154 / JCM 14090 / 6A8) protein is Diphthine synthase.